The sequence spans 313 residues: tRNA dimethylallyltransferase (313 aa).

10 to 17 contacts ATP; that stretch reads GPTASGKT. Residue 12–17 participates in substrate binding; it reads TASGKT. Interaction with substrate tRNA stretches follow at residues 35–38, 159–163, and 240–245; these read DSAM, QRIQR, and RCVGYR.

It belongs to the IPP transferase family. As to quaternary structure, monomer. Requires Mg(2+) as cofactor.

The enzyme catalyses adenosine(37) in tRNA + dimethylallyl diphosphate = N(6)-dimethylallyladenosine(37) in tRNA + diphosphate. Its function is as follows. Catalyzes the transfer of a dimethylallyl group onto the adenine at position 37 in tRNAs that read codons beginning with uridine, leading to the formation of N6-(dimethylallyl)adenosine (i(6)A). In Legionella pneumophila (strain Paris), this protein is tRNA dimethylallyltransferase.